Consider the following 201-residue polypeptide: Recombination protein RecR (201 aa).

Residues 57–72 (CADCRTFTEQDVCNIC) form a C4-type zinc finger. The Toprim domain maps to 81–176 (GQICVVESPA…SASRIAHGVP (96 aa)).

The protein belongs to the RecR family.

Its function is as follows. May play a role in DNA repair. It seems to be involved in an RecBC-independent recombinational process of DNA repair. It may act with RecF and RecO. The chain is Recombination protein RecR from Enterobacter sp. (strain 638).